A 365-amino-acid polypeptide reads, in one-letter code: Protein-glutamate methylesterase/protein-glutamine glutaminase 2 (365 aa).

A Response regulatory domain is found at 18–135 (RVLIVDDSAM…GQGLPAIMRD (118 aa)). Position 69 is a 4-aspartylphosphate (D69). The CheB-type methylesterase domain maps to 162–355 (GASEDWIHAL…ARMMLAAAAD (194 aa)). Residues S174, H200, and D297 contribute to the active site.

Belongs to the CheB family. Post-translationally, phosphorylated by CheA. Phosphorylation of the N-terminal regulatory domain activates the methylesterase activity.

It is found in the cytoplasm. The enzyme catalyses [protein]-L-glutamate 5-O-methyl ester + H2O = L-glutamyl-[protein] + methanol + H(+). It catalyses the reaction L-glutaminyl-[protein] + H2O = L-glutamyl-[protein] + NH4(+). Involved in chemotaxis. Part of a chemotaxis signal transduction system that modulates chemotaxis in response to various stimuli. Catalyzes the demethylation of specific methylglutamate residues introduced into the chemoreceptors (methyl-accepting chemotaxis proteins or MCP) by CheR. Also mediates the irreversible deamidation of specific glutamine residues to glutamic acid. The sequence is that of Protein-glutamate methylesterase/protein-glutamine glutaminase 2 from Cereibacter sphaeroides (strain ATCC 17023 / DSM 158 / JCM 6121 / CCUG 31486 / LMG 2827 / NBRC 12203 / NCIMB 8253 / ATH 2.4.1.) (Rhodobacter sphaeroides).